An 809-amino-acid polypeptide reads, in one-letter code: Phenylalanine--tRNA ligase beta subunit (809 aa).

One can recognise a tRNA-binding domain in the interval 39–154 (APPTSKIVVG…EDTPVGQDIR (116 aa)). Residues 405–480 (PQRAPVKMRV…RIYGFEKIPA (76 aa)) form the B5 domain. The Mg(2+) site is built by Asp-458, Asp-464, Glu-467, and Glu-468. In terms of domain architecture, FDX-ACB spans 707 to 808 (SKFPPVRRDI…RMARAGARLR (102 aa)).

This sequence belongs to the phenylalanyl-tRNA synthetase beta subunit family. Type 1 subfamily. As to quaternary structure, tetramer of two alpha and two beta subunits. It depends on Mg(2+) as a cofactor.

Its subcellular location is the cytoplasm. The catalysed reaction is tRNA(Phe) + L-phenylalanine + ATP = L-phenylalanyl-tRNA(Phe) + AMP + diphosphate + H(+). The sequence is that of Phenylalanine--tRNA ligase beta subunit from Burkholderia lata (strain ATCC 17760 / DSM 23089 / LMG 22485 / NCIMB 9086 / R18194 / 383).